The following is a 349-amino-acid chain: Phosphate acyltransferase (349 aa).

Belongs to the PlsX family. As to quaternary structure, homodimer. Probably interacts with PlsY.

It is found in the cytoplasm. It catalyses the reaction a fatty acyl-[ACP] + phosphate = an acyl phosphate + holo-[ACP]. It functions in the pathway lipid metabolism; phospholipid metabolism. Its function is as follows. Catalyzes the reversible formation of acyl-phosphate (acyl-PO(4)) from acyl-[acyl-carrier-protein] (acyl-ACP). This enzyme utilizes acyl-ACP as fatty acyl donor, but not acyl-CoA. The chain is Phosphate acyltransferase from Rhodospirillum rubrum (strain ATCC 11170 / ATH 1.1.1 / DSM 467 / LMG 4362 / NCIMB 8255 / S1).